Reading from the N-terminus, the 504-residue chain is MEKFQSYLGLDRSHYFLYPLIFQEYIYVLAHDHGLNGSILLENAGYDNKSSLLIVKRLIIRMYQQNHLILSVNDSKQTPFWGHNKNFYSQVMSEVSSTIMEIPLSLRLISSLERKGVVKSDNLRSIHSIFSFLEDNFSHLNYVLDILIPYPAHLEILVQALRYWIKDASSLHLLRFFLYECHNRDSLITSNSKKACSSFSKRNHRLFCFLYTSYLCEYESGFLFLRNQSSHLRSTSSGALIERIYFYGKIEHLAEVFAGAFQANFWLFKDSFMHYVRYQGKSILASKGTFLLMNKWKYYFVNFWKSSFYLWSHPGGIYINQLSNHSLDFLGYRSSVRLKPSMVRGQMLENTFLIDNAIKKFDSLVPIMPLVGSLAKSKFCNALGHPIGKAIWTDLSDSDIIERFGRIYRKLSHYHSGSSKKKGLYRVKYILRLSCARTLARKHKSTVRAFLKRFGSQLLEEFFTEEEQVFPLTFPRVSSISRRLSRRRIWYLDIVCINDLVNHE.

Belongs to the intron maturase 2 family. MatK subfamily.

It localises to the plastid. The protein localises to the chloroplast. Usually encoded in the trnK tRNA gene intron. Probably assists in splicing its own and other chloroplast group II introns. The sequence is that of Maturase K from Wollastonia biflora (Beach sunflower).